The chain runs to 339 residues: Phenylalanine--tRNA ligase alpha subunit (339 aa).

Glu254 is a Mg(2+) binding site.

The protein belongs to the class-II aminoacyl-tRNA synthetase family. Phe-tRNA synthetase alpha subunit type 1 subfamily. As to quaternary structure, tetramer of two alpha and two beta subunits. Mg(2+) is required as a cofactor.

It localises to the cytoplasm. It catalyses the reaction tRNA(Phe) + L-phenylalanine + ATP = L-phenylalanyl-tRNA(Phe) + AMP + diphosphate + H(+). The polypeptide is Phenylalanine--tRNA ligase alpha subunit (Clostridium botulinum (strain ATCC 19397 / Type A)).